Reading from the N-terminus, the 156-residue chain is Nascent polypeptide-associated complex subunit beta (156 aa).

Disordered stretches follow at residues 1–42 and 129–156; these read MPID…KDDT and QANENAGEAKDEAIPELVEGQSFDAEVE. The NAC-A/B domain maps to 38 to 103; sequence NKDDTKLHNQ…AQEKNLQELF (66 aa).

This sequence belongs to the NAC-beta family. Part of the nascent polypeptide-associated complex (NAC), consisting of EGD2 and EGD1. NAC associates with ribosomes via EGD1.

The protein resides in the cytoplasm. It is found in the nucleus. Its function is as follows. Component of the nascent polypeptide-associated complex (NAC), a dynamic component of the ribosomal exit tunnel, protecting the emerging polypeptides from interaction with other cytoplasmic proteins to ensure appropriate nascent protein targeting. The NAC complex also promotes mitochondrial protein import by enhancing productive ribosome interactions with the outer mitochondrial membrane and blocks the inappropriate interaction of ribosomes translating non-secretory nascent polypeptides with translocation sites in the membrane of the endoplasmic reticulum. EGD1 may act as a transcription factor that exert a negative effect on the expression of several genes that are transcribed by RNA polymerase II. In Candida glabrata (strain ATCC 2001 / BCRC 20586 / JCM 3761 / NBRC 0622 / NRRL Y-65 / CBS 138) (Yeast), this protein is Nascent polypeptide-associated complex subunit beta (EGD1).